The chain runs to 410 residues: PHAF1 protein At3g51130 (410 aa).

The protein belongs to the PHAF1 family.

This is PHAF1 protein At3g51130 from Arabidopsis thaliana (Mouse-ear cress).